A 423-amino-acid polypeptide reads, in one-letter code: Testin (423 aa).

Disordered regions lie at residues M1–S21 and E138–C169. The 108-residue stretch at M97–N204 folds into the PET domain. The segment covering P160–C169 has biased composition (basic and acidic residues). LIM zinc-binding domains follow at residues Y236–E299, P301–V361, and Q364–S423.

This sequence belongs to the prickle / espinas / testin family. As to quaternary structure, interacts via LIM domain 1 with ZYX. Interacts (via LIM domain 3) with ENAH and VASP. Interacts with ALKBH4, talin, actin, alpha-actinin, GRIP1 and PXN. Interacts (via LIM domain 2) with ACTL7A (via N-terminus). Heterodimer with ACTL7A; the heterodimer interacts with ENAH to form a heterotrimer. In terms of tissue distribution, detected at the acrosome of round spermatids (at protein level). Isoform TES1 transcript is highly expressed in adult testis and detected at low levels in other tissues. Isoform TES2 transcript is highly expressed in testis, kidney and spleen; intermediate in thymus, submaxillary gland and lung; detected at low levels in other tissues.

It is found in the cytoplasm. The protein localises to the cell junction. It localises to the focal adhesion. Functionally, scaffold protein that may play a role in cell adhesion, cell spreading and in the reorganization of the actin cytoskeleton. Plays a role in the regulation of cell proliferation. May act as a tumor suppressor. This Mus musculus (Mouse) protein is Testin (Tes).